The primary structure comprises 284 residues: Release factor glutamine methyltransferase (284 aa).

S-adenosyl-L-methionine contacts are provided by residues 121-125, D144, W172, and N188; that span reads GTGTG. Residue 188-191 coordinates substrate; the sequence is NPPY.

This sequence belongs to the protein N5-glutamine methyltransferase family. PrmC subfamily.

The catalysed reaction is L-glutaminyl-[peptide chain release factor] + S-adenosyl-L-methionine = N(5)-methyl-L-glutaminyl-[peptide chain release factor] + S-adenosyl-L-homocysteine + H(+). Methylates the class 1 translation termination release factors RF1/PrfA and RF2/PrfB on the glutamine residue of the universally conserved GGQ motif. This Aliivibrio fischeri (strain ATCC 700601 / ES114) (Vibrio fischeri) protein is Release factor glutamine methyltransferase.